The primary structure comprises 118 residues: UPF0449 protein C19orf25 (118 aa).

Tyr63 bears the Phosphotyrosine mark. Residues 81 to 109 (NVLRQRCELLQRAGEDLEREVAQMKQAAL) adopt a coiled-coil conformation.

Belongs to the UPF0449 family.

The protein is UPF0449 protein C19orf25 (C19orf25) of Homo sapiens (Human).